Reading from the N-terminus, the 505-residue chain is Amidophosphoribosyltransferase (505 aa).

The active-site Nucleophile is the cysteine 2. The 234-residue stretch at 2–235 folds into the Glutamine amidotransferase type-2 domain; the sequence is CGIVGIVSQS…AGEAVYVTFD (234 aa). Residues threonine 306, aspartate 368, and aspartate 369 each coordinate Mg(2+). Residues 484 to 505 are disordered; that stretch reads RNDNAKKKREKQASNLEIYNEQ. Over residues 496-505 the composition is skewed to polar residues; it reads ASNLEIYNEQ.

This sequence in the C-terminal section; belongs to the purine/pyrimidine phosphoribosyltransferase family. Requires Mg(2+) as cofactor.

It catalyses the reaction 5-phospho-beta-D-ribosylamine + L-glutamate + diphosphate = 5-phospho-alpha-D-ribose 1-diphosphate + L-glutamine + H2O. It participates in purine metabolism; IMP biosynthesis via de novo pathway; N(1)-(5-phospho-D-ribosyl)glycinamide from 5-phospho-alpha-D-ribose 1-diphosphate: step 1/2. Functionally, catalyzes the formation of phosphoribosylamine from phosphoribosylpyrophosphate (PRPP) and glutamine. The sequence is that of Amidophosphoribosyltransferase from Haemophilus influenzae (strain ATCC 51907 / DSM 11121 / KW20 / Rd).